The chain runs to 229 residues: Matrix protein (229 aa).

The dynamin binding signature appears at 2–4; it reads KSI. Positions 11-36 are disordered; sequence AKKEKKREKKSNHGSHSMEWESPPSY. Residues 13–23 are compositionally biased toward basic residues; that stretch reads KEKKREKKSNH. The PPXY motif signature appears at 33–36; the sequence is PPSY. Residues 42–45 carry the PTAP/PSAP motif motif; that stretch reads PSAP.

It belongs to the vesiculoviruses matrix protein family. In terms of assembly, homomultimer. Interacts with viral nucleocapsid; this interaction contributes to the virion assembly. Interacts with the viral envelope glycoprotein; this interaction contributes to the virion assembly. Interacts with host RAE1-NUP98 complex. Interacts with host NEDD4 and TSG101. Interacts with host dynamin. Interacts with host NDUFAF4; the interaction inhibits viral propagation and is independent of interferon activation. Interacts with host GTF2H5; the interaction may inhibit host transcription. Phosphorylated by host.

Its subcellular location is the virion. The protein resides in the host endomembrane system. It is found in the host nucleus membrane. It localises to the host nucleus. The protein localises to the host cytoplasm. Functionally, forms a double layer around the helical nucleocapsid, the inner matrix layer binding to the N helix and the outer matrix layer binding to the envelope glycoprotein. Plays a major role in assembly and budding of virion, by recruiting cellular partners of the ESCRT complexes that play a key role in releasing the budding particle from the host membrane. Condensates the ribonucleocapsid core during virus assembly. Inhibits the host mRNA nuclear export thereby inducing the shut off of cellular transcription and preventing the interferon signaling and the establishment of antiviral state in infected cells. This shutoff presumably inhibits interferon signaling and thus establishment of antiviral state in virus infected cells. Induces cell-rounding, cytoskeleton disorganization and apoptosis in infected cell. Inhibits host transcription, possibly through interaction with host DNA repair factor IIH/TFIIH GTF2H5 subunit. This is Matrix protein (M) from Piry virus (PIRYV).